The following is a 105-amino-acid chain: Thioredoxin (105 aa).

In terms of domain architecture, Thioredoxin spans 2 to 105; the sequence is VKQIDSKDAF…KLEATINEFV (104 aa). Lys-3 carries the post-translational modification N6-acetyllysine. Lys-8 carries the N6-succinyllysine modification. Residues Cys-32 and Cys-35 each act as nucleophile in the active site. Residues Cys-32 and Cys-35 are joined by a disulfide bond. Lys-39 is subject to N6-acetyllysine. S-nitrosocysteine occurs at positions 62 and 69. Position 73 is an S-nitrosocysteine; alternate (Cys-73). Lys-94 is modified (N6-acetyllysine; alternate). Lys-94 bears the N6-succinyllysine; alternate mark.

It belongs to the thioredoxin family. As to quaternary structure, homodimer; disulfide-linked. Interacts with TXNIP through the redox-active site. Interacts with MAP3K5 and CASP3. Interacts with APEX1; the interaction stimulates the FOS/JUN AP-1 DNA-binding activity in a redox-dependent manner. In terms of processing, in the fully reduced protein, both Cys-69 and Cys-73 are nitrosylated in response to nitric oxide (NO). When two disulfide bonds are present in the protein, only Cys-73 is nitrosylated. Cys-73 can serve as donor for nitrosylation of target proteins.

The protein resides in the nucleus. The protein localises to the cytoplasm. Its subcellular location is the secreted. Participates in various redox reactions through the reversible oxidation of its active center dithiol to a disulfide and catalyzes dithiol-disulfide exchange reactions. Plays a role in the reversible S-nitrosylation of cysteine residues in target proteins, and thereby contributes to the response to intracellular nitric oxide. Nitrosylates the active site Cys of CASP3 in response to nitric oxide (NO), and thereby inhibits caspase-3 activity. Induces the FOS/JUN AP-1 DNA binding activity in ionizing radiation (IR) cells through its oxidation/reduction status and stimulates AP-1 transcriptional activity. The polypeptide is Thioredoxin (TXN) (Callithrix jacchus (White-tufted-ear marmoset)).